A 127-amino-acid chain; its full sequence is Aspartate 1-decarboxylase (127 aa).

The active-site Schiff-base intermediate with substrate; via pyruvic acid is the Ser25. At Ser25 the chain carries Pyruvic acid (Ser). Thr57 lines the substrate pocket. The active-site Proton donor is Tyr58. 73–75 (GAA) is a substrate binding site.

Belongs to the PanD family. Heterooctamer of four alpha and four beta subunits. Pyruvate is required as a cofactor. In terms of processing, is synthesized initially as an inactive proenzyme, which is activated by self-cleavage at a specific serine bond to produce a beta-subunit with a hydroxyl group at its C-terminus and an alpha-subunit with a pyruvoyl group at its N-terminus.

Its subcellular location is the cytoplasm. It carries out the reaction L-aspartate + H(+) = beta-alanine + CO2. Its pathway is cofactor biosynthesis; (R)-pantothenate biosynthesis; beta-alanine from L-aspartate: step 1/1. In terms of biological role, catalyzes the pyruvoyl-dependent decarboxylation of aspartate to produce beta-alanine. The polypeptide is Aspartate 1-decarboxylase (Halalkalibacterium halodurans (strain ATCC BAA-125 / DSM 18197 / FERM 7344 / JCM 9153 / C-125) (Bacillus halodurans)).